Reading from the N-terminus, the 166-residue chain is Interferon gamma (166 aa).

Residues 1-23 form the signal peptide; sequence MKYTSYFLALLLCGLLGFSGSYG. Gln24 is subject to Pyrrolidone carboxylic acid. N-linked (GlcNAc...) asparagine glycans are attached at residues Asn39 and Asn106.

This sequence belongs to the type II (or gamma) interferon family. In terms of assembly, homodimer. Interacts with IFNGR1 (via extracellular domain); this interaction promotes IFNGR1 dimerization. As to expression, released primarily from activated T lymphocytes.

The protein resides in the secreted. In terms of biological role, type II interferon produced by immune cells such as T-cells and NK cells that plays crucial roles in antimicrobial, antiviral, and antitumor responses by activating effector immune cells and enhancing antigen presentation. Primarily signals through the JAK-STAT pathway after interaction with its receptor IFNGR1 to affect gene regulation. Upon IFNG binding, IFNGR1 intracellular domain opens out to allow association of downstream signaling components JAK2, JAK1 and STAT1, leading to STAT1 activation, nuclear translocation and transcription of IFNG-regulated genes. Many of the induced genes are transcription factors such as IRF1 that are able to further drive regulation of a next wave of transcription. Plays a role in class I antigen presentation pathway by inducing a replacement of catalytic proteasome subunits with immunoproteasome subunits. In turn, increases the quantity, quality, and repertoire of peptides for class I MHC loading. Increases the efficiency of peptide generation also by inducing the expression of activator PA28 that associates with the proteasome and alters its proteolytic cleavage preference. Up-regulates as well MHC II complexes on the cell surface by promoting expression of several key molecules such as cathepsins B/CTSB, H/CTSH, and L/CTSL. Participates in the regulation of hematopoietic stem cells during development and under homeostatic conditions by affecting their development, quiescence, and differentiation. The sequence is that of Interferon gamma (IFNG) from Bos taurus (Bovine).